We begin with the raw amino-acid sequence, 314 residues long: Epithelial-stromal interaction protein 1 (314 aa).

4 disordered regions span residues 1–72 (MYPR…PNET), 200–219 (NRSA…WKLP), 225–267 (PSRA…HQEE), and 292–314 (SQPG…GWGI). A compositionally biased stretch (basic and acidic residues) spans 43–58 (AEPKGPKLERQGHGDQ). A coiled-coil region spans residues 71–180 (ETRRQKIQRI…QEDIRRATLR (110 aa)). The span at 232–267 (AHKDSPQKEDNQKLQKTRDGHQKNKLLETKGQHQEE) shows a compositional bias: basic and acidic residues. Over residues 305 to 314 (NMNSTDGWGI) the composition is skewed to polar residues.

In terms of biological role, plays a role in M1 macrophage polarization and is required for the proper regulation of gene expression during M1 versus M2 macrophage differentiation. Might play a role in RELA/p65 and STAT1 phosphorylation and nuclear localization upon activation of macrophages. In Rattus norvegicus (Rat), this protein is Epithelial-stromal interaction protein 1 (Epsti1).